Consider the following 476-residue polypeptide: MHYFPVFADLNNRPVLVVGGGGVAARKVNLLLKANADVRIVAQKLNAELTALFELGHILWIAGEFNSEQIRNVFLVIAATDDEYLNERVFRVAESQQKLVNVVDDQARCSFIFPSIIDRNPIQVAVSSGGTAPVLARLLREKLEALLPQHLGAMADISGKWRHKVKTKLKTVTERRRFWESLFNGRFSQLLKNRQTEAAKKELELQLDKDYRGGFVSLVGAGPGDAGLLTLKGLQEIQQADVVLYDALVSDEILELVRRDAKLVFVGKRAQGKQVAQENTNALLVKYAQQGKRVVRLKGGDPFVFGRGGEELEVLAERQIPFSVVPGITAAIGATAYAGIPLTHRDYAQSAVFVTGHRKANASDIEWQTLARSNQTLVIYMGTLKAKDIAERLQQFGRAGSTPIAVISQGTQARQKTHIGTLTALAEIAENAPTPALIVVGEVVTLHDKLAWFGEQKFAQKRPHFTLDSLRIESVA.

The precorrin-2 dehydrogenase /sirohydrochlorin ferrochelatase stretch occupies residues 1–203 (MHYFPVFADL…RQTEAAKKEL (203 aa)). NAD(+) is bound by residues 22-23 (GV) and 43-44 (QK). Serine 128 carries the post-translational modification Phosphoserine. Residues 214–476 (GFVSLVGAGP…LDSLRIESVA (263 aa)) form a uroporphyrinogen-III C-methyltransferase region. Residue proline 223 participates in S-adenosyl-L-methionine binding. Catalysis depends on aspartate 246, which acts as the Proton acceptor. Residue lysine 268 is the Proton donor of the active site. S-adenosyl-L-methionine contacts are provided by residues 299 to 301 (GGD), valine 304, 329 to 330 (TA), methionine 381, and glycine 410.

It in the N-terminal section; belongs to the precorrin-2 dehydrogenase / sirohydrochlorin ferrochelatase family. In the C-terminal section; belongs to the precorrin methyltransferase family.

The catalysed reaction is uroporphyrinogen III + 2 S-adenosyl-L-methionine = precorrin-2 + 2 S-adenosyl-L-homocysteine + H(+). It carries out the reaction precorrin-2 + NAD(+) = sirohydrochlorin + NADH + 2 H(+). The enzyme catalyses siroheme + 2 H(+) = sirohydrochlorin + Fe(2+). It functions in the pathway cofactor biosynthesis; adenosylcobalamin biosynthesis; precorrin-2 from uroporphyrinogen III: step 1/1. The protein operates within cofactor biosynthesis; adenosylcobalamin biosynthesis; sirohydrochlorin from precorrin-2: step 1/1. Its pathway is porphyrin-containing compound metabolism; siroheme biosynthesis; precorrin-2 from uroporphyrinogen III: step 1/1. It participates in porphyrin-containing compound metabolism; siroheme biosynthesis; siroheme from sirohydrochlorin: step 1/1. It functions in the pathway porphyrin-containing compound metabolism; siroheme biosynthesis; sirohydrochlorin from precorrin-2: step 1/1. In terms of biological role, multifunctional enzyme that catalyzes the SAM-dependent methylations of uroporphyrinogen III at position C-2 and C-7 to form precorrin-2 via precorrin-1. Then it catalyzes the NAD-dependent ring dehydrogenation of precorrin-2 to yield sirohydrochlorin. Finally, it catalyzes the ferrochelation of sirohydrochlorin to yield siroheme. The sequence is that of Siroheme synthase from Actinobacillus succinogenes (strain ATCC 55618 / DSM 22257 / CCUG 43843 / 130Z).